Here is a 431-residue protein sequence, read N- to C-terminus: UPF0597 protein LCA_0156 (431 aa).

It belongs to the UPF0597 family.

This chain is UPF0597 protein LCA_0156, found in Latilactobacillus sakei subsp. sakei (strain 23K) (Lactobacillus sakei subsp. sakei).